Reading from the N-terminus, the 603-residue chain is Terpenoid synthase 25 (603 aa).

Residues D356, D360, N500, T504, and E508 each coordinate Mg(2+). The DDXXD motif signature appears at 356-360 (DDTCD).

Belongs to the terpene synthase family. Tpsa subfamily. Mg(2+) serves as cofactor. It depends on Mn(2+) as a cofactor. Predominantly expressed in roots but also in flowers.

It localises to the cytoplasm. It participates in secondary metabolite biosynthesis; terpenoid biosynthesis. In terms of biological role, involved in terpene biosynthesis in roots. Possesses sesquiterpene (C15) synthase activity in vitro. Does not seem to be involved in diterpene (C20) biosynthesis. The polypeptide is Terpenoid synthase 25 (Arabidopsis thaliana (Mouse-ear cress)).